The chain runs to 306 residues: 17-beta-hydroxysteroid dehydrogenase type 3 (306 aa).

Position 44–73 (44–73) interacts with NADP(+); it reads GQWAVITGAGDGIGKAYSFELARHGLNVVL. Residue Ser-181 coordinates substrate. The active-site Proton acceptor is Tyr-194.

Belongs to the short-chain dehydrogenases/reductases (SDR) family. 17-beta-HSD 3 subfamily.

It is found in the endoplasmic reticulum. The catalysed reaction is a 17beta-hydroxy steroid + NADP(+) = a 17-oxo steroid + NADPH + H(+). The enzyme catalyses testosterone + NADP(+) = androst-4-ene-3,17-dione + NADPH + H(+). It carries out the reaction 17beta-estradiol + NADP(+) = estrone + NADPH + H(+). It catalyses the reaction 3beta-hydroxyandrost-5-en-17-one + NADPH + H(+) = androst-5-en-3beta,17beta-diol + NADP(+). The catalysed reaction is 17beta-hydroxy-5alpha-androstan-3-one + NADP(+) = 5alpha-androstan-3,17-dione + NADPH + H(+). The enzyme catalyses androsterone + NADPH + H(+) = 5alpha-androstane-3alpha,17beta-diol + NADP(+). It carries out the reaction 3beta-hydroxy-5alpha-androstan-17-one + NADPH + H(+) = 5alpha-androstane-3beta,17beta-diol + NADP(+). It catalyses the reaction androst-4-ene-3,11,17-trione + NADPH + H(+) = 17beta-hydroxyandrost-4-ene-3,11-dione + NADP(+). The catalysed reaction is 11beta-hydroxyandrost-4-ene-3,17-dione + NADPH + H(+) = 11beta,17beta-dihydroxyandrost-4-ene-3-one + NADP(+). It participates in hormone biosynthesis; testosterone biosynthesis. It functions in the pathway steroid metabolism. In terms of biological role, catalyzes the conversion of 17-oxosteroids to 17beta-hydroxysteroids. Favors the reduction of androstenedione to testosterone. Testosterone is the key androgen driving male development and function. Uses NADPH while the two other EDH17B enzymes use NADH. Androgens such as epiandrosterone, dehydroepiandrosterone, androsterone and androstanedione are accepted as substrates and reduced at C-17. Can reduce 11-ketoandrostenedione as well as 11beta-hydroxyandrostenedione at C-17 to the respective testosterone forms. Plays a role in the rate-limiting-step for the maximum level of testosterone production by the testis but does not affect basal testosterone production. The chain is 17-beta-hydroxysteroid dehydrogenase type 3 from Rattus norvegicus (Rat).